We begin with the raw amino-acid sequence, 251 residues long: Imidazole glycerol phosphate synthase subunit HisF (251 aa).

Residues Asp12 and Asp131 contribute to the active site.

Belongs to the HisA/HisF family. Heterodimer of HisH and HisF.

The protein resides in the cytoplasm. The enzyme catalyses 5-[(5-phospho-1-deoxy-D-ribulos-1-ylimino)methylamino]-1-(5-phospho-beta-D-ribosyl)imidazole-4-carboxamide + L-glutamine = D-erythro-1-(imidazol-4-yl)glycerol 3-phosphate + 5-amino-1-(5-phospho-beta-D-ribosyl)imidazole-4-carboxamide + L-glutamate + H(+). The protein operates within amino-acid biosynthesis; L-histidine biosynthesis; L-histidine from 5-phospho-alpha-D-ribose 1-diphosphate: step 5/9. Its function is as follows. IGPS catalyzes the conversion of PRFAR and glutamine to IGP, AICAR and glutamate. The HisF subunit catalyzes the cyclization activity that produces IGP and AICAR from PRFAR using the ammonia provided by the HisH subunit. The sequence is that of Imidazole glycerol phosphate synthase subunit HisF from Streptomyces avermitilis (strain ATCC 31267 / DSM 46492 / JCM 5070 / NBRC 14893 / NCIMB 12804 / NRRL 8165 / MA-4680).